The primary structure comprises 167 residues: Bacterial non-heme ferritin-like protein (167 aa).

One can recognise a Ferritin-like diiron domain in the interval 1–145; sequence MATAGMLLKL…TILDEVRSAK (145 aa).

It belongs to the ferritin family. Prokaryotic subfamily.

It is found in the cytoplasm. The chain is Bacterial non-heme ferritin-like protein (ftnB) from Escherichia coli O157:H7.